Here is a 99-residue protein sequence, read N- to C-terminus: DNA-binding protein HU (99 aa).

Positions 67–86 (REGRNPKTGAKMKIDAYNQP) are disordered.

The protein belongs to the bacterial histone-like protein family. As to quaternary structure, homodimer.

Functionally, histone-like DNA-binding protein which is capable of wrapping DNA to stabilize it, and thus to prevent its denaturation under extreme environmental conditions. In Rickettsia felis (strain ATCC VR-1525 / URRWXCal2) (Rickettsia azadi), this protein is DNA-binding protein HU (hup).